Reading from the N-terminus, the 165-residue chain is SsrA-binding protein (165 aa).

Residues 141–165 are disordered; the sequence is EDRRHAIAERETKREMDREISRRRR.

It belongs to the SmpB family.

The protein localises to the cytoplasm. Its function is as follows. Required for rescue of stalled ribosomes mediated by trans-translation. Binds to transfer-messenger RNA (tmRNA), required for stable association of tmRNA with ribosomes. tmRNA and SmpB together mimic tRNA shape, replacing the anticodon stem-loop with SmpB. tmRNA is encoded by the ssrA gene; the 2 termini fold to resemble tRNA(Ala) and it encodes a 'tag peptide', a short internal open reading frame. During trans-translation Ala-aminoacylated tmRNA acts like a tRNA, entering the A-site of stalled ribosomes, displacing the stalled mRNA. The ribosome then switches to translate the ORF on the tmRNA; the nascent peptide is terminated with the 'tag peptide' encoded by the tmRNA and targeted for degradation. The ribosome is freed to recommence translation, which seems to be the essential function of trans-translation. The chain is SsrA-binding protein from Anaeromyxobacter sp. (strain Fw109-5).